We begin with the raw amino-acid sequence, 131 residues long: Ribosome-binding factor A (131 aa).

It belongs to the RbfA family. In terms of assembly, monomer. Binds 30S ribosomal subunits, but not 50S ribosomal subunits or 70S ribosomes.

The protein resides in the cytoplasm. In terms of biological role, one of several proteins that assist in the late maturation steps of the functional core of the 30S ribosomal subunit. Associates with free 30S ribosomal subunits (but not with 30S subunits that are part of 70S ribosomes or polysomes). Required for efficient processing of 16S rRNA. May interact with the 5'-terminal helix region of 16S rRNA. This Ruegeria pomeroyi (strain ATCC 700808 / DSM 15171 / DSS-3) (Silicibacter pomeroyi) protein is Ribosome-binding factor A.